The primary structure comprises 56 residues: Large ribosomal subunit protein bL32 (56 aa).

The segment at 1-37 (MAVQQNKKSRSKRGMRRSHDALSTAQLSVDATSGELH) is disordered. Basic residues predominate over residues 7 to 16 (KKSRSKRGMR). A compositionally biased stretch (polar residues) spans 21 to 31 (ALSTAQLSVDA).

Belongs to the bacterial ribosomal protein bL32 family.

The sequence is that of Large ribosomal subunit protein bL32 from Shewanella pealeana (strain ATCC 700345 / ANG-SQ1).